A 581-amino-acid chain; its full sequence is Rhodanese-like domain-containing protein 6 (581 aa).

The 101-residue stretch at 158–258 folds into the Rhodanese domain; that stretch reads ENKELVLLDA…YLEQFPSGGF (101 aa). C216 functions as the Cysteine persulfide intermediate in the catalytic mechanism.

The chain is Rhodanese-like domain-containing protein 6 (STR6) from Arabidopsis thaliana (Mouse-ear cress).